Consider the following 84-residue polypeptide: U4-theraphotoxin-Hhn1a (84 aa).

A signal peptide spans 1–22; the sequence is MKVTLIAIPTCAAVLVLHTTAA. Positions 23 to 47 are excised as a propeptide; that stretch reads EELEESQLMEVGMPDTELAAVDEER. Disulfide bonds link cysteine 51-cysteine 65, cysteine 55-cysteine 76, and cysteine 70-cysteine 81.

Belongs to the neurotoxin 12 (Hwtx-2) family. 02 (Hwtx-2) subfamily. Expressed by the venom gland.

It is found in the secreted. In terms of biological role, postsynaptic neurotoxin. This chain is U4-theraphotoxin-Hhn1a, found in Cyriopagopus hainanus (Chinese bird spider).